Here is a 556-residue protein sequence, read N- to C-terminus: Phosphoacetylglucosamine mutase (556 aa).

Ser68 functions as the Phosphoserine intermediate in the catalytic mechanism. Mg(2+)-binding residues include Ser68, Asp286, Asp288, and Asp290. The residue at position 68 (Ser68) is a Phosphoserine. Substrate-binding positions include 386–388 (EAN), 518–522 (RPSGT), and Arg527.

It belongs to the phosphohexose mutase family. Mg(2+) serves as cofactor.

It catalyses the reaction N-acetyl-alpha-D-glucosamine 1-phosphate = N-acetyl-D-glucosamine 6-phosphate. It participates in nucleotide-sugar biosynthesis; UDP-N-acetyl-alpha-D-glucosamine biosynthesis; N-acetyl-alpha-D-glucosamine 1-phosphate from alpha-D-glucosamine 6-phosphate (route I): step 2/2. In terms of biological role, interconverts GlcNAc-6-P and GlcNAc-1-P. The polypeptide is Phosphoacetylglucosamine mutase (DRT101) (Arabidopsis thaliana (Mouse-ear cress)).